The chain runs to 650 residues: Acetyl-coenzyme A synthetase (650 aa).

CoA contacts are provided by residues 191-194, Thr-311, and Asn-335; that span reads RGGR. Residues 387-389, 411-416, Asp-500, and Arg-515 each bind ATP; these read GEP and DTWWQT. A CoA-binding site is contributed by Ser-523. Arg-526 lines the ATP pocket. Mg(2+)-binding residues include Val-537, His-539, and Val-542. A CoA-binding site is contributed by Arg-584. Lys-609 bears the N6-acetyllysine mark.

It belongs to the ATP-dependent AMP-binding enzyme family. The cofactor is Mg(2+). Acetylated. Deacetylation by the SIR2-homolog deacetylase activates the enzyme.

It carries out the reaction acetate + ATP + CoA = acetyl-CoA + AMP + diphosphate. Its function is as follows. Catalyzes the conversion of acetate into acetyl-CoA (AcCoA), an essential intermediate at the junction of anabolic and catabolic pathways. AcsA undergoes a two-step reaction. In the first half reaction, AcsA combines acetate with ATP to form acetyl-adenylate (AcAMP) intermediate. In the second half reaction, it can then transfer the acetyl group from AcAMP to the sulfhydryl group of CoA, forming the product AcCoA. This is Acetyl-coenzyme A synthetase from Shewanella sediminis (strain HAW-EB3).